Here is a 121-residue protein sequence, read N- to C-terminus: Small ribosomal subunit protein uS11 (121 aa).

Belongs to the universal ribosomal protein uS11 family. As to quaternary structure, part of the 30S ribosomal subunit. Interacts with proteins S7 and S18. Binds to IF-3.

Located on the platform of the 30S subunit, it bridges several disparate RNA helices of the 16S rRNA. Forms part of the Shine-Dalgarno cleft in the 70S ribosome. This is Small ribosomal subunit protein uS11 from Mycoplasma pneumoniae (strain ATCC 29342 / M129 / Subtype 1) (Mycoplasmoides pneumoniae).